We begin with the raw amino-acid sequence, 218 residues long: tRNA (guanine-N(7)-)-methyltransferase (218 aa).

Positions 43, 68, 101, and 124 each coordinate S-adenosyl-L-methionine. Residues K128 and D160 each coordinate substrate.

It belongs to the class I-like SAM-binding methyltransferase superfamily. TrmB family.

It catalyses the reaction guanosine(46) in tRNA + S-adenosyl-L-methionine = N(7)-methylguanosine(46) in tRNA + S-adenosyl-L-homocysteine. The protein operates within tRNA modification; N(7)-methylguanine-tRNA biosynthesis. Its function is as follows. Catalyzes the formation of N(7)-methylguanine at position 46 (m7G46) in tRNA. The sequence is that of tRNA (guanine-N(7)-)-methyltransferase from Acetivibrio thermocellus (strain ATCC 27405 / DSM 1237 / JCM 9322 / NBRC 103400 / NCIMB 10682 / NRRL B-4536 / VPI 7372) (Clostridium thermocellum).